Here is a 207-residue protein sequence, read N- to C-terminus: MAFTEIKHPLIIDKLTRMRKTETSSKDFRENLNEIAQLMVYEIFRDLKLEPVEITTPVAKTTGYTINQPVVLVPILRAGIGMLDGIQKLIPTARIAHVGLYRDETTLEIHQYFAKTTKDIDKSYVIVVDPMLATGGSACKAIDIVKQWGAKEVKFVCLVAVEPGIKRLQEQHPDVEIYAASKDEKLNEKGYIIPGLGDAGDRIFGTK.

Residues Arg-77, Arg-102, and 129-137 (DPMLATGGS) contribute to the 5-phospho-alpha-D-ribose 1-diphosphate site. Residues Ile-192 and 197–199 (GDA) contribute to the uracil site. Asp-198 serves as a coordination point for 5-phospho-alpha-D-ribose 1-diphosphate.

It belongs to the UPRTase family. Mg(2+) serves as cofactor.

The enzyme catalyses UMP + diphosphate = 5-phospho-alpha-D-ribose 1-diphosphate + uracil. It participates in pyrimidine metabolism; UMP biosynthesis via salvage pathway; UMP from uracil: step 1/1. Allosterically activated by GTP. Functionally, catalyzes the conversion of uracil and 5-phospho-alpha-D-ribose 1-diphosphate (PRPP) to UMP and diphosphate. The polypeptide is Uracil phosphoribosyltransferase (Mycoplasma mycoides subsp. mycoides SC (strain CCUG 32753 / NCTC 10114 / PG1)).